The following is a 148-amino-acid chain: MSSSKRIAKELSDLGRDPPASCSAGPVGDDLYHWQASIMGPSDSPYAGGVFFLSIHFPTDYPFKPPKVNFTTKIYHPNINSSGNICLDILKDQWSPALTLSKVLLSICSLLTDANPDDPLVPEIAQIYKTDKAKYEATAKEWTKKYAV.

One can recognise a UBC core domain in the interval 2–148; sequence SSSKRIAKEL…AKEWTKKYAV (147 aa). Ser12 is modified (phosphoserine). The active-site Glycyl thioester intermediate is the Cys86. Residue Lys91 forms a Glycyl lysine isopeptide (Lys-Gly) (interchain with G-Cter in ubiquitin) linkage.

It belongs to the ubiquitin-conjugating enzyme family. In terms of assembly, component of the RSP5-UBA1-UBC5 ubiquitin ligase complex composed of E3 RSP5, E1 UBA1 and E2 UBC5. Post-translationally, the N-terminus is blocked.

The catalysed reaction is S-ubiquitinyl-[E1 ubiquitin-activating enzyme]-L-cysteine + [E2 ubiquitin-conjugating enzyme]-L-cysteine = [E1 ubiquitin-activating enzyme]-L-cysteine + S-ubiquitinyl-[E2 ubiquitin-conjugating enzyme]-L-cysteine.. The protein operates within protein modification; protein ubiquitination. In terms of biological role, catalyzes the covalent attachment of ubiquitin to other proteins. Mediates the selective degradation of short-lived and abnormal proteins. The RSP5-UBA1-UBC5 ubiquitin ligase complex ubiquitinates RPO21 forming 'Lys-63'-linked polyubiquitin chains. This is Ubiquitin-conjugating enzyme E2-16 kDa (UBC5) from Saccharomyces cerevisiae (strain ATCC 204508 / S288c) (Baker's yeast).